A 474-amino-acid chain; its full sequence is Photosystem II CP43 reaction center protein (474 aa).

Positions M1–E14 are excised as a propeptide. T15 is subject to N-acetylthreonine. Residue T15 is modified to Phosphothreonine. Helical transmembrane passes span L69–A93, L134–N155, K178–T201, K256–S276, and W292–A313. E368 serves as a coordination point for [CaMn4O5] cluster. A helical transmembrane segment spans residues R448–P472.

Belongs to the PsbB/PsbC family. PsbC subfamily. PSII is composed of 1 copy each of membrane proteins PsbA, PsbB, PsbC, PsbD, PsbE, PsbF, PsbH, PsbI, PsbJ, PsbK, PsbL, PsbM, PsbT, PsbX, PsbY, PsbZ, Psb30/Ycf12, at least 3 peripheral proteins of the oxygen-evolving complex and a large number of cofactors. It forms dimeric complexes. Requires Binds multiple chlorophylls and provides some of the ligands for the Ca-4Mn-5O cluster of the oxygen-evolving complex. It may also provide a ligand for a Cl- that is required for oxygen evolution. PSII binds additional chlorophylls, carotenoids and specific lipids. as cofactor.

The protein resides in the plastid. The protein localises to the chloroplast thylakoid membrane. In terms of biological role, one of the components of the core complex of photosystem II (PSII). It binds chlorophyll and helps catalyze the primary light-induced photochemical processes of PSII. PSII is a light-driven water:plastoquinone oxidoreductase, using light energy to abstract electrons from H(2)O, generating O(2) and a proton gradient subsequently used for ATP formation. This chain is Photosystem II CP43 reaction center protein, found in Citrus sinensis (Sweet orange).